The following is a 706-amino-acid chain: Fatty acid oxidation complex subunit alpha (706 aa).

The tract at residues 1–188 is enoyl-CoA hydratase; the sequence is MDKSFTLNRL…KMGLVDDVVP (188 aa). The segment at 308–706 is 3-hydroxyacyl-CoA dehydrogenase; the sequence is KAVNKVMVLG…MAESGSKFYE (399 aa).

The protein in the N-terminal section; belongs to the enoyl-CoA hydratase/isomerase family. This sequence in the central section; belongs to the 3-hydroxyacyl-CoA dehydrogenase family. In terms of assembly, heterotetramer of two alpha chains (FadJ) and two beta chains (FadI).

The protein resides in the cytoplasm. The catalysed reaction is a (3S)-3-hydroxyacyl-CoA = a (2E)-enoyl-CoA + H2O. The enzyme catalyses a 4-saturated-(3S)-3-hydroxyacyl-CoA = a (3E)-enoyl-CoA + H2O. It catalyses the reaction a (3S)-3-hydroxyacyl-CoA + NAD(+) = a 3-oxoacyl-CoA + NADH + H(+). It carries out the reaction (3S)-3-hydroxybutanoyl-CoA = (3R)-3-hydroxybutanoyl-CoA. The protein operates within lipid metabolism; fatty acid beta-oxidation. Catalyzes the formation of a hydroxyacyl-CoA by addition of water on enoyl-CoA. Also exhibits 3-hydroxyacyl-CoA epimerase and 3-hydroxyacyl-CoA dehydrogenase activities. The protein is Fatty acid oxidation complex subunit alpha of Shewanella loihica (strain ATCC BAA-1088 / PV-4).